The primary structure comprises 88 residues: Small ribosomal subunit protein bS16 (88 aa).

Belongs to the bacterial ribosomal protein bS16 family.

The protein is Small ribosomal subunit protein bS16 of Mycoplasmopsis pulmonis (strain UAB CTIP) (Mycoplasma pulmonis).